The primary structure comprises 94 residues: Phosphoribosyl-ATP pyrophosphatase (94 aa).

It belongs to the PRA-PH family.

It is found in the cytoplasm. The enzyme catalyses 1-(5-phospho-beta-D-ribosyl)-ATP + H2O = 1-(5-phospho-beta-D-ribosyl)-5'-AMP + diphosphate + H(+). Its pathway is amino-acid biosynthesis; L-histidine biosynthesis; L-histidine from 5-phospho-alpha-D-ribose 1-diphosphate: step 2/9. The protein is Phosphoribosyl-ATP pyrophosphatase of Saccharolobus islandicus (strain Y.N.15.51 / Yellowstone #2) (Sulfolobus islandicus).